Reading from the N-terminus, the 1411-residue chain is Alpha-latroinsectotoxin-Lt1a (1411 aa).

Positions 1-35 (ACSSPEVSIFHFFVYAGSFVKNFKKMKGSSAISKR) are excised as a propeptide. The helix H8 is the probable transmembrane region of the tetrameric pore inserted in the target cell membrane stretch occupies residues 245-264 (ALYALFYGTETFISIMFYLV). ANK repeat units lie at residues 462-495 (DIHRDLYNAAQVPYAREALSISRTLIQNGANVSE), 499-528 (LGRGAIHAAASAGNYDVGELLLNKDINLLE), 533-562 (NGYTPLHIAADSNKNDFVMFLIGNNADVNV), 567-597 (DLFTPLHLAARRDLTDVTQTLIDITEIDLNA), 601-630 (SGFTPLHLSISSTSETAAILIRNTNAVINI), 634-663 (VGLTPLHLATLQNNLSVSKLLAGKGAYLND), 667-697 (NGMTPLHYAAMTGNLEMVDFLLNQQYININA), 702-732 (KKWTPLHLAILFKKNDVAERLLSDENLNIRL), 736-765 (GGINPLHLASATGNKQLVIELLAKNADVTR), 769-798 (KGFSALHLGIIGKNEEIPFFLVEKGANVND), 802-831 (SGVTPLHFAAGLGKANIFRLLLSRGADIKA), 835-864 (NSQMPIHEAVSNGHLEIVRILIEKDPSLMN), 869-898 (RNEYPFYLAVEKRYKDIFDYFVSKDANVNE), 902-931 (NGNTLLHLFSSTGELEVVQFLMQNGANFRL), 935-965 (ERKTFFDLAIENGRLNIVAFAVEKNKVNLQA), 968-999 (RGKTILYHAICDSAKYDKIEIVKYFIEKLNES), 1000-1029 (ECNPLHEAAAYAHLDLVKYFVQERGINPAE), 1080-1109 (QENTPITVAIFANKVSILNYLVGIGADPNQ), 1112-1142 (DGDPPLYIAARQGRFEIVRCLIEVHKVDINT), and 1146-1175 (ERFTALHAAARNDFMDVVKYLVRQGADVNA). A propeptide spanning residues 1196–1411 (QSSRFLRSGH…KVNSNVSQIK (216 aa)) is cleaved from the precursor. Positions 1230–1249 (DKLTQQISSKGTRSDSNSTE) are enriched in polar residues. The interval 1230–1254 (DKLTQQISSKGTRSDSNSTEGKMHS) is disordered. One copy of the ANK 21 repeat lies at 1331–1361 (NVHSKIYKAIMSGRRSVISEMLCSFAEEYSK).

This sequence belongs to the cationic peptide 01 (latrotoxin) family. 02 (alpha-latroinsectotoxin) subfamily. Homotetramer in membranes. Expressed by the venom gland.

The protein localises to the secreted. Its subcellular location is the target cell membrane. Insecticidal presynaptic neurotoxin that induces massive neurotransmitter release at insect (but not vertebrate) neuromuscular junctions. Native toxin forms cation-permeable pores (with high permeability to calcium) in lipid membranes locust muscle membrane and artificial lipid bilayers. May bind to insect neurexin-1 homolog, insect adhesion G protein-coupled receptor L1 homolog, and insect receptor-type tyrosine-protein phosphatase S homolog, and induces neurotransmitter exocytosis both by forming tetrameric pores in membranes and signaling via G protein-coupled receptor. Oligomerization is a process independent of divalent cations. The toxin forms channels with 0.55-0.58 nm entrance diameter and a relatively small conductance in planar phospholipid membranes. The protein is Alpha-latroinsectotoxin-Lt1a of Latrodectus tredecimguttatus (Mediterranean black widow spider).